Consider the following 116-residue polypeptide: Large ribosomal subunit protein bL17 (116 aa).

The protein belongs to the bacterial ribosomal protein bL17 family. As to quaternary structure, part of the 50S ribosomal subunit. Contacts protein L32.

In Prochlorococcus marinus (strain MIT 9211), this protein is Large ribosomal subunit protein bL17.